The following is a 374-amino-acid chain: tRNA-specific 2-thiouridylase MnmA (374 aa).

Residues 10–17 and L36 each bind ATP; that span reads AMSGGVDS. The Nucleophile role is filled by C111. C111 and C209 are disulfide-bonded. G135 lines the ATP pocket. An interaction with tRNA region spans residues 159-161; it reads KDQ. C209 (cysteine persulfide intermediate) is an active-site residue.

It belongs to the MnmA/TRMU family.

The protein resides in the cytoplasm. The catalysed reaction is S-sulfanyl-L-cysteinyl-[protein] + uridine(34) in tRNA + AH2 + ATP = 2-thiouridine(34) in tRNA + L-cysteinyl-[protein] + A + AMP + diphosphate + H(+). In terms of biological role, catalyzes the 2-thiolation of uridine at the wobble position (U34) of tRNA, leading to the formation of s(2)U34. This is tRNA-specific 2-thiouridylase MnmA from Acidobacterium capsulatum (strain ATCC 51196 / DSM 11244 / BCRC 80197 / JCM 7670 / NBRC 15755 / NCIMB 13165 / 161).